The primary structure comprises 239 residues: Riboflavin synthase (239 aa).

Lumazine-binding repeat units follow at residues 1 to 105 (MFTG…MGGH) and 106 to 205 (VVQG…EKQI). 2,4-dihydroxypteridine contacts are provided by residues 4–6 (GLV), 54–56 (CLT), 70–75 (GISPET), 109–111 (GHV), Lys145, 154–156 (SLT), and 170–175 (SMVSYT).

As to quaternary structure, homotrimer.

The enzyme catalyses 2 6,7-dimethyl-8-(1-D-ribityl)lumazine + H(+) = 5-amino-6-(D-ribitylamino)uracil + riboflavin. Its pathway is cofactor biosynthesis; riboflavin biosynthesis; riboflavin from 2-hydroxy-3-oxobutyl phosphate and 5-amino-6-(D-ribitylamino)uracil: step 2/2. Catalyzes the dismutation of two molecules of 6,7-dimethyl-8-ribityllumazine, resulting in the formation of riboflavin and 5-amino-6-(D-ribitylamino)uracil. The chain is Riboflavin synthase (RIB5) from Meyerozyma guilliermondii (strain ATCC 6260 / CBS 566 / DSM 6381 / JCM 1539 / NBRC 10279 / NRRL Y-324) (Yeast).